Here is a 540-residue protein sequence, read N- to C-terminus: GMP synthase [glutamine-hydrolyzing] (540 aa).

The Glutamine amidotransferase type-1 domain maps to 24–217 (KILIVDFGSQ…VRKVAGLTGD (194 aa)). Residue Cys-101 is the Nucleophile of the active site. Catalysis depends on residues His-191 and Glu-193. Residues 218–415 (WTMRAFREEA…LGLPEIFVGR (198 aa)) enclose the GMPS ATP-PPase domain. An ATP-binding site is contributed by 245 to 251 (SGGVDSS).

In terms of assembly, homodimer.

It catalyses the reaction XMP + L-glutamine + ATP + H2O = GMP + L-glutamate + AMP + diphosphate + 2 H(+). It participates in purine metabolism; GMP biosynthesis; GMP from XMP (L-Gln route): step 1/1. Functionally, catalyzes the synthesis of GMP from XMP. This chain is GMP synthase [glutamine-hydrolyzing], found in Nitrobacter hamburgensis (strain DSM 10229 / NCIMB 13809 / X14).